Here is a 969-residue protein sequence, read N- to C-terminus: Defective in germ line development protein 3 (969 aa).

Residues Met-34–Ser-81 are gld-2-binding. 5 KH domains span residues Met-34–Ile-109, Arg-113–Asn-187, His-189–Leu-259, Phe-270–Leu-342, and Pro-344–Val-419. Residues Pro-57 to Ser-471 are gls-1-binding. Disordered regions lie at residues Leu-459 to Glu-508 and Glu-602 to His-711. Positions Lys-487–Glu-508 are enriched in polar residues. Positions Pro-631–Pro-644 are enriched in low complexity. Positions Arg-647 to Ser-659 are enriched in basic and acidic residues. Over residues Arg-664–Glu-676 the composition is skewed to polar residues. Basic and acidic residues-rich tracts occupy residues Ser-677–Tyr-687 and Leu-694–His-711. Positions Leu-769 to Tyr-969 are gls-1-binding. The interval Asn-860–Ala-949 is fbf-1-binding. Positions Asp-950–Tyr-969 are disordered. Polar residues predominate over residues Glu-954–Tyr-969.

As to quaternary structure, interacts (via its KH1 domain) with gld-2. Isoform A but not isoform B interacts specifically with fbf-1 and fbf-2 in an RNA-independent manner. Isoform A interacts with gls-1 isoform C. As to expression, expressed in the germline (at protein level). In adult hermaphrodites, first detected in the transition zone (TZ), weakly expressed in the early mitotic region and in pachytene germ cells, and becomes more abundantly expressed as germ cells enter diakinesis (at protein level). Expressed in primary spermatocytes, but not in secondary spermatocytes or adult sperm (at protein level).

It localises to the cytoplasm. The protein resides in the cytoplasmic granule. It is found in the perinuclear region. Required maternally for germline survival and embryogenesis. Forms a complex with gls-1 which promotes the oogenic cell fate by freeing the translational repressor fbf to repress sperm promoting factors. Promotes maturation of primary spermatocytes to mature sperm. Required during hermaphrodite development to promote sperm fate, which is critical for determining the normal number of sperm. Promotion of sperm fate is at the expense of oogenesis, possibly through the negative regulation of fbf. Required during male development for the continued production of sperm and inhibition of oogenesis. Together with gld-2, promotes the transition from mitosis to meiosis. Required for polyadenylation of neg-1 mRNA during embryogenesis. In Caenorhabditis elegans, this protein is Defective in germ line development protein 3.